The primary structure comprises 645 residues: uncharacterized protein (645 aa).

A signal peptide spans 1–23 (MPSSHRLSATILIFLSLTYISSS). Disordered stretches follow at residues 30 to 58 (ITDK…TTAS) and 92 to 129 (NSNA…AGIP). Residues 92-102 (NSNANPYFSTT) show a composition bias toward polar residues. N-linked (GlcNAc...) asparagine glycosylation occurs at Asn-107. Over residues 107–119 (NRSDSSQKARDPD) the composition is skewed to basic and acidic residues. Residues 135-214 (CFRRYENSII…QTRDYFEPTD (80 aa)) form the PAN 1 domain. 2 disulfide bridges follow: Cys-161–Cys-187 and Cys-165–Cys-175. Residues 225–247 (ESSSSAPSSEDEDSPPSPPPSAP) form a disordered region. 2 consecutive PAN domains span residues 281–369 (CPRG…EKIC) and 378–465 (CPST…EVEC). Disulfide bonds link Cys-281–Cys-369, Cys-313–Cys-341, Cys-317–Cys-329, Cys-378–Cys-465, Cys-407–Cys-436, and Cys-411–Cys-422. Asn-421 carries an N-linked (GlcNAc...) asparagine glycan. Residues 556-567 (AGELENNDHEQI) show a composition bias toward basic and acidic residues. The tract at residues 556-582 (AGELENNDHEQIEDNNTDASEDPVPTK) is disordered. Asn-570 carries N-linked (GlcNAc...) asparagine glycosylation.

This is an uncharacterized protein from Caenorhabditis elegans.